The primary structure comprises 285 residues: Kanamycin B dioxygenase (285 aa).

Belongs to the PhyH family. It depends on Fe cation as a cofactor.

It catalyses the reaction kanamycin B + 2-oxoglutarate + O2 = 2'-dehydrokanamycin A + succinate + NH4(+) + CO2. The protein operates within antibiotic biosynthesis; kanamycin biosynthesis. Functionally, mediates the conversion of kanamycin B into 2'-dehydrokanamycin A during the transformation of kanamycin B to kanamycin A. The protein is Kanamycin B dioxygenase (kanJ) of Streptomyces kanamyceticus.